The chain runs to 130 residues: Large ribosomal subunit protein eL32 (130 aa).

Serine 40 is subject to Phosphoserine.

This sequence belongs to the eukaryotic ribosomal protein eL32 family. Component of the large ribosomal subunit (LSU). Mature yeast ribosomes consist of a small (40S) and a large (60S) subunit. The 40S small subunit contains 1 molecule of ribosomal RNA (18S rRNA) and 33 different proteins (encoded by 57 genes). The large 60S subunit contains 3 rRNA molecules (25S, 5.8S and 5S rRNA) and 46 different proteins (encoded by 81 genes).

Its subcellular location is the cytoplasm. Functionally, component of the ribosome, a large ribonucleoprotein complex responsible for the synthesis of proteins in the cell. The small ribosomal subunit (SSU) binds messenger RNAs (mRNAs) and translates the encoded message by selecting cognate aminoacyl-transfer RNA (tRNA) molecules. The large subunit (LSU) contains the ribosomal catalytic site termed the peptidyl transferase center (PTC), which catalyzes the formation of peptide bonds, thereby polymerizing the amino acids delivered by tRNAs into a polypeptide chain. The nascent polypeptides leave the ribosome through a tunnel in the LSU and interact with protein factors that function in enzymatic processing, targeting, and the membrane insertion of nascent chains at the exit of the ribosomal tunnel. The polypeptide is Large ribosomal subunit protein eL32 (Saccharomyces cerevisiae (strain ATCC 204508 / S288c) (Baker's yeast)).